An 89-amino-acid chain; its full sequence is Alpha-ketoglutarate dehydrogenase subunit 4, mitochondrial (89 aa).

Belongs to the alpha-ketoglutarate dehydrogenase component 4 family. In terms of assembly, component of the 2-oxoglutarate dehydrogenase complex (OGDC), also called alpha-ketoglutarate dehydrogenase (KGDH) complex. The copmplex is composed of the catalytic subunits OGDH (2-oxoglutarate dehydrogenase kgd1; also called E1 subunit), DLST (dihydrolipoamide succinyltransferase kgd2; also called E2 subunit) and DLD (dihydrolipoamide dehydrogenase dld1; also called E3 subunit), and the assembly factor KGD4. Within OGDC, interacts (via N-terminus) with E3 subunit and (via C-terminus) with the complex core formed by E1 and E2 subunits.

The protein resides in the mitochondrion. Its function is as follows. Molecular adapter that is necessary to a form a stable 2-oxoglutarate dehydrogenase enzyme complex (OGDC). Required for incorporation of the E3 subunit (dld1) into the E1-E2 core (kgd1-kgd2) of mitochondrial OGDC, and acting as a stability factor for the fully assembled complex. The polypeptide is Alpha-ketoglutarate dehydrogenase subunit 4, mitochondrial (kgd4) (Schizosaccharomyces pombe (strain 972 / ATCC 24843) (Fission yeast)).